The primary structure comprises 263 residues: Proteasome subunit alpha type-1 (263 aa).

The residue at position 1 (methionine 1) is an N-acetylmethionine. The residue at position 110 (serine 110) is a Phosphoserine; alternate. A glycan (O-linked (GlcNAc) serine; alternate) is linked at serine 110. Lysine 115 is covalently cross-linked (Glycyl lysine isopeptide (Lys-Gly) (interchain with G-Cter in ubiquitin)). The residue at position 177 (serine 177) is a Phosphoserine. Residue lysine 208 forms a Glycyl lysine isopeptide (Lys-Gly) (interchain with G-Cter in ubiquitin) linkage. Residues 232–263 form a disordered region; sequence FLEGLEERPQRKAQPTQPADEPAEKADEPMEH. Residues 253–263 are compositionally biased toward basic and acidic residues; sequence PAEKADEPMEH.

This sequence belongs to the peptidase T1A family. The 26S proteasome consists of a 20S proteasome core and two 19S regulatory subunits. The 20S proteasome core is a barrel-shaped complex made of 28 subunits that are arranged in four stacked rings. The two outer rings are each formed by seven alpha subunits, and the two inner rings are formed by seven beta subunits. The proteolytic activity is exerted by three beta-subunits PSMB5, PSMB6 and PSMB7. Interacts with NOTCH3. Interacts with ZFAND1.

Its subcellular location is the cytoplasm. The protein resides in the nucleus. Its function is as follows. Component of the 20S core proteasome complex involved in the proteolytic degradation of most intracellular proteins. This complex plays numerous essential roles within the cell by associating with different regulatory particles. Associated with two 19S regulatory particles, forms the 26S proteasome and thus participates in the ATP-dependent degradation of ubiquitinated proteins. The 26S proteasome plays a key role in the maintenance of protein homeostasis by removing misfolded or damaged proteins that could impair cellular functions, and by removing proteins whose functions are no longer required. Associated with the PA200 or PA28, the 20S proteasome mediates ubiquitin-independent protein degradation. This type of proteolysis is required in several pathways including spermatogenesis (20S-PA200 complex) or generation of a subset of MHC class I-presented antigenic peptides (20S-PA28 complex). This Bos taurus (Bovine) protein is Proteasome subunit alpha type-1 (PSMA1).